A 183-amino-acid polypeptide reads, in one-letter code: Phosphopantetheine adenylyltransferase (183 aa).

T13 serves as a coordination point for substrate. ATP is bound by residues 13-14 (TF) and H21. Residues K45, L81, and R95 each contribute to the substrate site. Residues 96-98 (GLR), E106, and 131-137 (HQFISSR) each bind ATP.

The protein belongs to the bacterial CoaD family. As to quaternary structure, homohexamer. Mg(2+) is required as a cofactor.

The protein localises to the cytoplasm. It carries out the reaction (R)-4'-phosphopantetheine + ATP + H(+) = 3'-dephospho-CoA + diphosphate. It functions in the pathway cofactor biosynthesis; coenzyme A biosynthesis; CoA from (R)-pantothenate: step 4/5. Reversibly transfers an adenylyl group from ATP to 4'-phosphopantetheine, yielding dephospho-CoA (dPCoA) and pyrophosphate. The chain is Phosphopantetheine adenylyltransferase from Rhodospirillum centenum (strain ATCC 51521 / SW).